The primary structure comprises 428 residues: Chaperone SurA (428 aa).

Positions 1-19 (MNIWKTLLLGMLVTGSAVS) are cleaved as a signal peptide. PpiC domains follow at residues 170 to 268 (SVEY…KIED) and 277 to 377 (VTEV…EVLD).

The protein localises to the periplasm. The enzyme catalyses [protein]-peptidylproline (omega=180) = [protein]-peptidylproline (omega=0). Chaperone involved in the correct folding and assembly of outer membrane proteins. Recognizes specific patterns of aromatic residues and the orientation of their side chains, which are found more frequently in integral outer membrane proteins. May act in both early periplasmic and late outer membrane-associated steps of protein maturation. The sequence is that of Chaperone SurA from Vibrio vulnificus (strain YJ016).